The primary structure comprises 886 residues: Kinesin-like protein KIF18A (886 aa).

In terms of domain architecture, Kinesin motor spans 11-355 (RMKVVVRVRP…LKYANRAKEI (345 aa)). Lys-24 participates in a covalent cross-link: Glycyl lysine isopeptide (Lys-Gly) (interchain with G-Cter in SUMO2). ATP is bound at residue 113-120 (GATGSGKT). A coiled-coil region spans residues 370–404 (ISQYVKICNMQKAEILMLKEKLKAYEEQKALSDRN). Position 674 is a phosphoserine (Ser-674). A Glycyl lysine isopeptide (Lys-Gly) (interchain with G-Cter in SUMO2) cross-link involves residue Lys-683. Ser-695 carries the phosphoserine modification. The disordered stretch occupies residues 774–804 (EQEPLASSKSSVHRIESSSFSTKDSMPESAG). Lys-782 participates in a covalent cross-link: Glycyl lysine isopeptide (Lys-Gly) (interchain with G-Cter in SUMO2). Ser-826 carries the phosphoserine modification. Residue Lys-862 forms a Glycyl lysine isopeptide (Lys-Gly) (interchain with G-Cter in SUMO2) linkage. The tract at residues 862-886 (KRNTNKTNSNMLRKFRRNTSKENVQ) is disordered.

This sequence belongs to the TRAFAC class myosin-kinesin ATPase superfamily. Kinesin family. In terms of assembly, interacts with CENPE and ESR1. Post-translationally, glycosylated. Ubiquitinated.

Its subcellular location is the cell projection. It is found in the ruffle. The protein resides in the cytoplasm. The protein localises to the nucleus. It localises to the cytoskeleton. Its subcellular location is the microtubule organizing center. It is found in the centrosome. Functionally, microtubule-depolymerizing kinesin which plays a role in chromosome congression by reducing the amplitude of preanaphase oscillations and slowing poleward movement during anaphase, thus suppressing chromosome movements. May stabilize the CENPE-BUB1B complex at the kinetochores during early mitosis and maintains CENPE levels at kinetochores during chromosome congression. This is Kinesin-like protein KIF18A (Kif18a) from Mus musculus (Mouse).